The primary structure comprises 573 residues: PCNA-interacting partner (573 aa).

Residues 492-532 (TGGQVKNKPCKNVANKRSKRKQVDIQSETTNAQENEPPQKK) form a disordered region. Polar residues predominate over residues 515–527 (DIQSETTNAQENE).

This sequence belongs to the PARI family.

It is found in the cytoplasm. Its subcellular location is the nucleus. Functionally, required to suppress inappropriate homologous recombination, thereby playing a central role DNA repair and in the maintenance of genomic stability. This chain is PCNA-interacting partner (parpbp), found in Xenopus tropicalis (Western clawed frog).